Reading from the N-terminus, the 591-residue chain is Asparagine synthetase [glutamine-hydrolyzing] 2 (591 aa).

Cys2 serves as the catalytic For GATase activity. In terms of domain architecture, Glutamine amidotransferase type-2 spans 2 to 185; it reads CGILAVLGVA…PGHLYSSKTG (184 aa). L-glutamine contacts are provided by residues 50 to 54, 75 to 77, and Asp98; these read RLAIV and NGE. One can recognise an Asparagine synthetase domain in the interval 193 to 516; that stretch reads PPWFSESIPS…PKNAARLTVP (324 aa). ATP contacts are provided by residues Leu231, Ile267, and 341–342; that span reads SG.

In terms of tissue distribution, expressed in companion cells of leaf sheath vascular bundles, and phloem-parenchyma cells, nucellar projections and nucellar epidermis of dorsal vascular bundles of grains.

It catalyses the reaction L-aspartate + L-glutamine + ATP + H2O = L-asparagine + L-glutamate + AMP + diphosphate + H(+). It functions in the pathway amino-acid biosynthesis; L-asparagine biosynthesis; L-asparagine from L-aspartate (L-Gln route): step 1/1. In terms of biological role, essential for nitrogen assimilation, distribution and remobilization within the plant via the phloem. In Oryza sativa subsp. japonica (Rice), this protein is Asparagine synthetase [glutamine-hydrolyzing] 2.